The sequence spans 115 residues: Large ribosomal subunit protein bL20 (115 aa).

This sequence belongs to the bacterial ribosomal protein bL20 family.

Functionally, binds directly to 23S ribosomal RNA and is necessary for the in vitro assembly process of the 50S ribosomal subunit. It is not involved in the protein synthesizing functions of that subunit. The chain is Large ribosomal subunit protein bL20 from Bdellovibrio bacteriovorus (strain ATCC 15356 / DSM 50701 / NCIMB 9529 / HD100).